The chain runs to 156 residues: LIM domain only protein 3 (156 aa).

LIM zinc-binding domains lie at 22–84 (KGCA…LFGV) and 86–148 (GNCA…GLMK).

This chain is LIM domain only protein 3, found in Xenopus laevis (African clawed frog).